The chain runs to 430 residues: Asparagine--tRNA ligase (430 aa).

Belongs to the class-II aminoacyl-tRNA synthetase family. Homodimer.

The protein resides in the cytoplasm. It carries out the reaction tRNA(Asn) + L-asparagine + ATP = L-asparaginyl-tRNA(Asn) + AMP + diphosphate + H(+). The sequence is that of Asparagine--tRNA ligase from Staphylococcus aureus (strain MRSA252).